Reading from the N-terminus, the 90-residue chain is Small ribosomal subunit protein uS15c (90 aa).

This sequence belongs to the universal ribosomal protein uS15 family. Part of the 30S ribosomal subunit.

It localises to the plastid. The protein resides in the chloroplast. This is Small ribosomal subunit protein uS15c (rps15) from Manihot esculenta (Cassava).